The following is a 446-amino-acid chain: tRNA modification GTPase MnmE (446 aa).

(6S)-5-formyl-5,6,7,8-tetrahydrofolate-binding residues include Arg-24, Glu-81, and Lys-120. In terms of domain architecture, TrmE-type G spans 216 to 368; that stretch reads GLHAVLIGPP…LHIRLRELAL (153 aa). Asn-226 contributes to the K(+) binding site. GTP contacts are provided by residues 226–231, 245–251, and 270–273; these read NAGKSS, TDVAGTT, and DTAG. Ser-230 is a Mg(2+) binding site. Thr-245, Val-247, and Thr-250 together coordinate K(+). Thr-251 serves as a coordination point for Mg(2+). Lys-446 provides a ligand contact to (6S)-5-formyl-5,6,7,8-tetrahydrofolate.

Belongs to the TRAFAC class TrmE-Era-EngA-EngB-Septin-like GTPase superfamily. TrmE GTPase family. As to quaternary structure, homodimer. Heterotetramer of two MnmE and two MnmG subunits. K(+) serves as cofactor.

It is found in the cytoplasm. In terms of biological role, exhibits a very high intrinsic GTPase hydrolysis rate. Involved in the addition of a carboxymethylaminomethyl (cmnm) group at the wobble position (U34) of certain tRNAs, forming tRNA-cmnm(5)s(2)U34. This is tRNA modification GTPase MnmE from Xanthomonas oryzae pv. oryzae (strain MAFF 311018).